A 226-amino-acid chain; its full sequence is Peptidyl-prolyl cis-trans isomerase CYP23 (226 aa).

An N-terminal signal peptide occupies residues 1-22 (MGITRNLILGLACLAFVSIAKA). The PPIase cyclophilin-type domain occupies 34–191 (VVFQTSYGDI…ERITILSTYY (158 aa)).

It belongs to the cyclophilin-type PPIase family. In terms of tissue distribution, ubiquitous. Lower expression in roots.

Its subcellular location is the endoplasmic reticulum. The enzyme catalyses [protein]-peptidylproline (omega=180) = [protein]-peptidylproline (omega=0). Its function is as follows. PPIases accelerate the folding of proteins. It catalyzes the cis-trans isomerization of proline imidic peptide bonds in oligopeptides. In Arabidopsis thaliana (Mouse-ear cress), this protein is Peptidyl-prolyl cis-trans isomerase CYP23 (CYP23).